The sequence spans 566 residues: MKQSMVFSPTLREVPADAEIKSHQLLLRAGFMRQNASGIYSFLPFGLKVLHKVERIVREEMERAGAVELLMPAMQAAELWQESGRWYSYGSELMRMKDRNAREFALGATHEEVITDLVRDEVKSYKKLPLTLYQIQTKFRDEQRPRFGLLRGREFLMKDAYSFHATQESLDEVYDRLYKAYSNIFARCGLNFRAVIADSGAMGGKDTHEFMVLSDVGEDTIAYSDTSDYAANIEMAPVVATYTKSDEAEKELEKVATPDQKAIEEVSAFLNIEADKCIKSMVFKVDEKLVVVLVRGDHEVNDVKVKNVYGASVVELASHEEVKELLNCEVGSLGPIGVNGDIEIIADHAVASIVNGCSGANEEGFHYVNVNPERDFKVSQYTDLRFIQEGDQSPDGNGTILFARGIEVGHVFKLGTRYSEAMNATFLDENGKTQPLIMGCYGIGVSRTVAAIAEQFNDENGLVWPKAVAPFHVHVIPVNMKSDAQREMGENIYNSLQEQGYEVLLDDRAERAGVKFADADLFGLPVRVTVGKKADEGIVEVKVRATGESEEVKVEELQTYIANILK.

The protein belongs to the class-II aminoacyl-tRNA synthetase family. ProS type 1 subfamily. Homodimer.

Its subcellular location is the cytoplasm. The enzyme catalyses tRNA(Pro) + L-proline + ATP = L-prolyl-tRNA(Pro) + AMP + diphosphate. Catalyzes the attachment of proline to tRNA(Pro) in a two-step reaction: proline is first activated by ATP to form Pro-AMP and then transferred to the acceptor end of tRNA(Pro). As ProRS can inadvertently accommodate and process non-cognate amino acids such as alanine and cysteine, to avoid such errors it has two additional distinct editing activities against alanine. One activity is designated as 'pretransfer' editing and involves the tRNA(Pro)-independent hydrolysis of activated Ala-AMP. The other activity is designated 'posttransfer' editing and involves deacylation of mischarged Ala-tRNA(Pro). The misacylated Cys-tRNA(Pro) is not edited by ProRS. The chain is Proline--tRNA ligase from Bacillus anthracis (strain A0248).